The primary structure comprises 82 residues: Small ribosomal subunit protein bS18 (82 aa).

This sequence belongs to the bacterial ribosomal protein bS18 family. Part of the 30S ribosomal subunit. Forms a tight heterodimer with protein bS6.

Its function is as follows. Binds as a heterodimer with protein bS6 to the central domain of the 16S rRNA, where it helps stabilize the platform of the 30S subunit. The polypeptide is Small ribosomal subunit protein bS18 (Bartonella bacilliformis (strain ATCC 35685 / KC583 / Herrer 020/F12,63)).